The chain runs to 356 residues: Stomatin-like protein 2, mitochondrial (356 aa).

The N-terminal 28 residues, 1-28, are a transit peptide targeting the mitochondrion; the sequence is MLARAARGTGALLLKGSVQASARAPRRA. Ser-17 carries the post-translational modification Phosphoserine; by PKC/PRKCZ. Tyr-124 is modified (phosphotyrosine). At Lys-145 the chain carries N6-acetyllysine; alternate. Lys-145 carries the post-translational modification N6-succinyllysine; alternate. A coiled-coil region spans residues 215–252; that stretch reads INVAEGKKQAQILASEAEKAEQINQAAGEASAVLAKAK. N6-acetyllysine is present on Lys-233. The segment at 326-356 is disordered; sequence EAQDSVSSRSSRDVRSTDASLDEELDRVKLS. Ser-330 is modified (phosphoserine).

The protein belongs to the band 7/mec-2 family. As to quaternary structure, forms homooligomers. Interacts with MFN2; may form heterooligomers with this mediator of mitochondrial fusion. Interacts with PHB1 and PHB2; stabilizes and recruits them to cardiolipin-enriched mitochondrial membranes. Interacts with CACNA2D2.

The protein localises to the cell membrane. The protein resides in the mitochondrion. It localises to the mitochondrion inner membrane. It is found in the mitochondrion intermembrane space. Its subcellular location is the membrane raft. The protein localises to the cytoplasm. The protein resides in the cytoskeleton. Mitochondrial protein that probably regulates the biogenesis and the activity of mitochondria. Stimulates cardiolipin biosynthesis, binds cardiolipin-enriched membranes where it recruits and stabilizes some proteins including prohibitin and may therefore act in the organization of functional microdomains in mitochondrial membranes. Through regulation of the mitochondrial function may play a role into several biological processes including cell migration, cell proliferation, T-cell activation, calcium homeostasis and cellular response to stress. May play a role in calcium homeostasis through negative regulation of calcium efflux from mitochondria. Required for mitochondrial hyperfusion a pro-survival cellular response to stress which results in increased ATP production by mitochondria. May also regulate the organization of functional domains at the plasma membrane and play a role in T-cell activation through association with the T-cell receptor signaling complex and its regulation. The protein is Stomatin-like protein 2, mitochondrial (STOML2) of Bos taurus (Bovine).